A 125-amino-acid chain; its full sequence is Fluoride-specific ion channel FluC (125 aa).

The next 4 helical transmembrane spans lie at 6–26 (AWIA…SGLV), 36–56 (WGTW…WALA), 68–88 (FIVL…AFEA), and 97–117 (WLLA…CVFL). Na(+) contacts are provided by Gly76 and Thr79.

The protein belongs to the fluoride channel Fluc/FEX (TC 1.A.43) family.

It is found in the cell inner membrane. The enzyme catalyses fluoride(in) = fluoride(out). Its activity is regulated as follows. Na(+) is not transported, but it plays an essential structural role and its presence is essential for fluoride channel function. Fluoride-specific ion channel. Important for reducing fluoride concentration in the cell, thus reducing its toxicity. In Nitrosococcus oceani (strain ATCC 19707 / BCRC 17464 / JCM 30415 / NCIMB 11848 / C-107), this protein is Fluoride-specific ion channel FluC.